We begin with the raw amino-acid sequence, 156 residues long: Small ribosomal subunit protein uS7 (156 aa).

This sequence belongs to the universal ribosomal protein uS7 family. In terms of assembly, part of the 30S ribosomal subunit. Contacts proteins S9 and S11.

In terms of biological role, one of the primary rRNA binding proteins, it binds directly to 16S rRNA where it nucleates assembly of the head domain of the 30S subunit. Is located at the subunit interface close to the decoding center, probably blocks exit of the E-site tRNA. The protein is Small ribosomal subunit protein uS7 of Methylobacterium radiotolerans (strain ATCC 27329 / DSM 1819 / JCM 2831 / NBRC 15690 / NCIMB 10815 / 0-1).